Reading from the N-terminus, the 331-residue chain is MTATTQTPRHDWSKDEVLALFEQPFNDLLHQAQTTHRAHFDPNTVQVSTLLSIKTGACPEDCKYCPQSVRYDTGLEREQILAVEEVVAAARRARDAGATRFCMGAAWRSPKDRDLETVEAMVREVKALGLETCLTLGMLRDGQAERLREAGLDYYNHNLDTSEDYYDEIITTRSYQDRLDTLARVRDAGLKTCCGGIIGMGETRQDRAELLRTLASLPVQPQSVPINQLVQVPGTPLHGVEPPDPFEFVRTIAVARILMPASYVRLSAGREQMSDELQALCFLAGANSIFYGDKLLTTGNPEADKDRRLLARLGMGFEAHACAQAEAEDLG.

In terms of domain architecture, Radical SAM core spans 43-267 (NTVQVSTLLS…LMPASYVRLS (225 aa)). Residues Cys58, Cys62, and Cys65 each coordinate [4Fe-4S] cluster. [2Fe-2S] cluster-binding residues include Cys102, Cys133, Cys193, and Arg265.

It belongs to the radical SAM superfamily. Biotin synthase family. As to quaternary structure, homodimer. The cofactor is [4Fe-4S] cluster. [2Fe-2S] cluster is required as a cofactor.

It catalyses the reaction (4R,5S)-dethiobiotin + (sulfur carrier)-SH + 2 reduced [2Fe-2S]-[ferredoxin] + 2 S-adenosyl-L-methionine = (sulfur carrier)-H + biotin + 2 5'-deoxyadenosine + 2 L-methionine + 2 oxidized [2Fe-2S]-[ferredoxin]. The protein operates within cofactor biosynthesis; biotin biosynthesis; biotin from 7,8-diaminononanoate: step 2/2. In terms of biological role, catalyzes the conversion of dethiobiotin (DTB) to biotin by the insertion of a sulfur atom into dethiobiotin via a radical-based mechanism. The polypeptide is Biotin synthase (Alkalilimnicola ehrlichii (strain ATCC BAA-1101 / DSM 17681 / MLHE-1)).